The chain runs to 487 residues: MSLSVCTSALSRRSSSQNGAAGRPWGASASSVAGGYGGSASGFGVGCGGLFSAASMFGSSSGFSGGSAGCLPGLGSAYGGPLRGGAGGMGIGMGIAGSSGGGSLCIFSGNDGGLLSGSEKETMQNLNDRLASYLGKVRSLEEANAELENKIREWYETRRTRDAGSQSDYSKYYPLIEDLKNKIVSARVSNAQLLLQIDNARLAAEDFRMKYENELALRQTVEADINGLRRVLDELTLTRADLEAQLETLTEELAYMKKNHEEELQSFQAGGPGEVNVEMDAAPGVDLTKVLNEMRAQYEAMAEQNRKDAEAWFLEKSGELRKEISSNTEQLQSSKSEVTDLKRMVQNLEIELQSQLAMKSSLEGSLAETEGGYCCQLSQVQQLIGSLEEQLQQVRADAERQNADHQRLLGVKARLEMEIETYRRLLEGDSQGDGFDESSSLSVSKPQTPSVDSSKDPNKTRKIKTVVQEIVNGEVVSSQVQELEEEM.

The segment at 1-118 (MSLSVCTSAL…GNDGGLLSGS (118 aa)) is head. The coil 1A stretch occupies residues 119-154 (EKETMQNLNDRLASYLGKVRSLEEANAELENKIREW). The IF rod domain maps to 119–433 (EKETMQNLND…RLLEGDSQGD (315 aa)). Residues 158–175 (RRTRDAGSQSDYSKYYPL) are linker 1. Residues 176–267 (IEDLKNKIVS…KNHEEELQSF (92 aa)) form a coil 1B region. Residues 268 to 290 (QAGGPGEVNVEMDAAPGVDLTKV) form a linker 12 region. The coil 2 stretch occupies residues 291 to 428 (LNEMRAQYEA…IETYRRLLEG (138 aa)). Residues 428–461 (GDSQGDGFDESSSLSVSKPQTPSVDSSKDPNKTR) are disordered. Positions 429–487 (DSQGDGFDESSSLSVSKPQTPSVDSSKDPNKTRKIKTVVQEIVNGEVVSSQVQELEEEM) are tail. Residues 437–452 (ESSSLSVSKPQTPSVD) are compositionally biased toward polar residues.

The protein belongs to the intermediate filament family. As to quaternary structure, heterotetramer of two type I and two type II keratins. Keratin-3 associates with keratin-12. As to expression, expressed in the corneal epithelium (at protein level). Also expressed in the suprabasal limbal epithelium of the cornea (at protein level).

Its function is as follows. Involved in corneal epithelium organization, integrity and corneal keratin expression. This chain is Keratin, type I cytoskeletal 12 (Krt12), found in Mus musculus (Mouse).